The sequence spans 202 residues: FMN-dependent NADH:quinone oxidoreductase 2 (202 aa).

Residues Ser9, 15–17 (SVS), 93–96 (MYNF), and 137–140 (SRGG) each bind FMN.

Belongs to the azoreductase type 1 family. As to quaternary structure, homodimer. Requires FMN as cofactor.

It catalyses the reaction 2 a quinone + NADH + H(+) = 2 a 1,4-benzosemiquinone + NAD(+). The enzyme catalyses N,N-dimethyl-1,4-phenylenediamine + anthranilate + 2 NAD(+) = 2-(4-dimethylaminophenyl)diazenylbenzoate + 2 NADH + 2 H(+). Functionally, quinone reductase that provides resistance to thiol-specific stress caused by electrophilic quinones. In terms of biological role, also exhibits azoreductase activity. Catalyzes the reductive cleavage of the azo bond in aromatic azo compounds to the corresponding amines. The protein is FMN-dependent NADH:quinone oxidoreductase 2 of Bradyrhizobium diazoefficiens (strain JCM 10833 / BCRC 13528 / IAM 13628 / NBRC 14792 / USDA 110).